The primary structure comprises 292 residues: Ribosomal protein L11 methyltransferase (292 aa).

Positions 136, 159, 181, and 228 each coordinate S-adenosyl-L-methionine.

It belongs to the methyltransferase superfamily. PrmA family.

The protein resides in the cytoplasm. It catalyses the reaction L-lysyl-[protein] + 3 S-adenosyl-L-methionine = N(6),N(6),N(6)-trimethyl-L-lysyl-[protein] + 3 S-adenosyl-L-homocysteine + 3 H(+). In terms of biological role, methylates ribosomal protein L11. This Agrobacterium fabrum (strain C58 / ATCC 33970) (Agrobacterium tumefaciens (strain C58)) protein is Ribosomal protein L11 methyltransferase.